We begin with the raw amino-acid sequence, 291 residues long: 4-diphosphocytidyl-2-C-methyl-D-erythritol kinase (291 aa).

K10 is an active-site residue. 99-109 (PMGGGLGGGSS) is a binding site for ATP. Residue D141 is part of the active site.

This sequence belongs to the GHMP kinase family. IspE subfamily. As to quaternary structure, homodimer.

It catalyses the reaction 4-CDP-2-C-methyl-D-erythritol + ATP = 4-CDP-2-C-methyl-D-erythritol 2-phosphate + ADP + H(+). It functions in the pathway isoprenoid biosynthesis; isopentenyl diphosphate biosynthesis via DXP pathway; isopentenyl diphosphate from 1-deoxy-D-xylulose 5-phosphate: step 3/6. Catalyzes the phosphorylation of the position 2 hydroxy group of 4-diphosphocytidyl-2C-methyl-D-erythritol. In Proteus mirabilis (strain HI4320), this protein is 4-diphosphocytidyl-2-C-methyl-D-erythritol kinase.